The primary structure comprises 153 residues: Ribosome maturation factor RimP (153 aa).

This sequence belongs to the RimP family.

The protein resides in the cytoplasm. Functionally, required for maturation of 30S ribosomal subunits. The chain is Ribosome maturation factor RimP from Clostridium botulinum (strain Kyoto / Type A2).